The sequence spans 299 residues: MSLSNLPTEMVNPKTRNLDARDTFEILKLINEEDALVALAIREVLTEIDKVVQMCINCLEKNGRVFYVGAGTSGRVAYVDAVELIPTYSLQEGVFIPIIAGGTQALGKSVEGVEDDEEGGKNDLFSYKPSEKDVVIGIAASGRTPYVAGALRYAKQCGCKTALICNVRKPLLAEYADVVIAAETGPEVVAGSTRMKAGTAQKMILNMISTTVMVKMGKVYDNLMVDVMVLNEKLRERAQNIVTHITGVDKQTAEIYLKKADYNVKVAVLMILSKNDVEECRKILQDQSNLRKALQIAVR.

The SIS domain occupies 55 to 218; sequence CINCLEKNGR…STTVMVKMGK (164 aa). The Proton donor role is filled by glutamate 83. Residue glutamate 114 is part of the active site.

Belongs to the GCKR-like family. MurNAc-6-P etherase subfamily. Homodimer.

The catalysed reaction is N-acetyl-D-muramate 6-phosphate + H2O = N-acetyl-D-glucosamine 6-phosphate + (R)-lactate. Its pathway is amino-sugar metabolism; N-acetylmuramate degradation. Its function is as follows. Specifically catalyzes the cleavage of the D-lactyl ether substituent of MurNAc 6-phosphate, producing GlcNAc 6-phosphate and D-lactate. This is N-acetylmuramic acid 6-phosphate etherase from Pseudothermotoga lettingae (strain ATCC BAA-301 / DSM 14385 / NBRC 107922 / TMO) (Thermotoga lettingae).